Consider the following 211-residue polypeptide: UPF0637 protein Bsph_1379 (211 aa).

Belongs to the UPF0637 family.

The protein is UPF0637 protein Bsph_1379 of Lysinibacillus sphaericus (strain C3-41).